The following is a 390-amino-acid chain: MSHRKFEHPRHGSLGFLPRKRASRHRGKVKAFPKDDPTKPCRLTSFLGYKAGMTHIVRDVEKPGSKLHKKETCEAVTIIETPPMVVVGVVGYVKTPRGLRSLCTVWAQHLSEELRRRFYKNWAKSKKKAFTRYSKKHETEEGKKDIQSQLEKMKKYCSVIRVLAHTQIRKMKGLKQKKAHLNEIQINGGDIAKKVDYACSLFEKQVPVDAIFQKDEMIDIIGVTKGKGYEGVVTRWGVTRLPRKTHRGLRKVACIGAWHPARVSYTVARAGQNGYHHRTEMNKKVYRVGKVGQETHSAMTEYDRTEKDITPMGGFPHYGIVKEDYLMIKGCCVGPKKRVVTLRQTLLKQTSRLAMEEIKLKFIDAASNGGHGRFQTSQEKAKFYGRTIKA.

Residues 1–36 (MSHRKFEHPRHGSLGFLPRKRASRHRGKVKAFPKDD) are disordered. The segment covering 18-31 (PRKRASRHRGKVKA) has biased composition (basic residues).

This sequence belongs to the universal ribosomal protein uL3 family.

It is found in the cytoplasm. In Arabidopsis thaliana (Mouse-ear cress), this protein is Large ribosomal subunit protein uL3y (ARP2).